The sequence spans 701 residues: Acetyl-coenzyme A synthetase, cytoplasmic (701 aa).

The interval 1-41 is disordered; it reads MGLPEERVRSGSGSRGQEEAGAGGRARSWSPPPEVSRSAHV. Residues 1–107 are interaction with TFEB; sequence MGLPEERVRS…GATTNICYNV (107 aa). S28, S30, and S36 each carry phosphoserine. Residue 219 to 222 participates in CoA binding; sequence RGEK. Phosphoserine is present on residues S263, S265, and S267. Residue T363 participates in CoA binding. Residue K418 is modified to N6-acetyllysine. ATP is bound by residues 439 to 441, 463 to 468, D552, and R567; these read GEP and DTFWQT. Residues S575 and R636 each contribute to the CoA site. Residues 656–668 carry the Nuclear localization signal motif; the sequence is KTRSGKIMRRVLR. S659 carries the post-translational modification Phosphoserine; by AMPK. Residue K661 is modified to N6-acetyllysine.

The protein belongs to the ATP-dependent AMP-binding enzyme family. As to quaternary structure, monomer. Interacts with TFEB. AMPK-mediated phosphorylated form at Ser-659 interacts with KPNA1; this interaction results in nuclear translocation of ACSS2. Interacts with the 'Thr-172' phosphorylated form of PRKAA2. Interacts with CREBBP. Post-translationally, reversibly acetylated at Lys-661. The acetyl-CoA synthase activity is inhibited by acetylation and activated by deacetylation mediated by the deacetylases SIRT1 and SIRT3. In terms of processing, glucose deprivation results in its AMPK-dependent phosphorylation at Ser-659, which leads to exposure of its nuclear localization signal, required for its interaction with KPNA1 and subsequent translocation to the nucleus.

The protein resides in the cytoplasm. It localises to the cytosol. Its subcellular location is the nucleus. The catalysed reaction is acetate + ATP + CoA = acetyl-CoA + AMP + diphosphate. The enzyme catalyses propanoate + ATP + CoA = propanoyl-CoA + AMP + diphosphate. Its activity is regulated as follows. Inhibited by acetylation at Lys-661 and activated by deacetylation mediated by the deacetylases SIRT1 and SIRT3. Catalyzes the synthesis of acetyl-CoA from short-chain fatty acids. Acetate is the preferred substrate. Can also utilize propionate with a much lower affinity. Nuclear ACSS2 promotes glucose deprivation-induced lysosomal biogenesis and autophagy, tumor cell survival and brain tumorigenesis. Glucose deprivation results in AMPK-mediated phosphorylation of ACSS2 leading to its translocation to the nucleus where it binds to TFEB and locally produces acetyl-CoA for histone acetylation in the promoter regions of TFEB target genes thereby activating their transcription. The regulation of genes associated with autophagy and lysosomal activity through ACSS2 is important for brain tumorigenesis and tumor survival. Acts as a chromatin-bound transcriptional coactivator that up-regulates histone acetylation and expression of neuronal genes. Can be recruited to the loci of memory-related neuronal genes to maintain a local acetyl-CoA pool, providing the substrate for histone acetylation and promoting the expression of specific genes, which is essential for maintaining long-term spatial memory. In Homo sapiens (Human), this protein is Acetyl-coenzyme A synthetase, cytoplasmic (ACSS2).